We begin with the raw amino-acid sequence, 72 residues long: Mitochondrial import protein 2 (72 aa).

The disordered stretch occupies residues 1-22; that stretch reads MAEVLDLEIDPISDGEDDTYSS. The Cytoplasmic segment spans residues 1–34; the sequence is MAEVLDLEIDPISDGEDDTYSSELDDDLKDSIEQ. Residues 35-52 traverse the membrane as a helical segment; it reads LERVLCLVVFPLLGKFLG. Residues 53 to 72 lie on the Mitochondrial intermembrane side of the membrane; sequence RKFAFHAWARWLERRRLVSN.

It belongs to the MIM2 family. Component of the mitochondrial outer import machinery (MIM) complex containing at least mim1 and mim2. Interacts with mim1. Interacts with mitophagy receptor atg43.

It is found in the mitochondrion outer membrane. Its function is as follows. Component of the mitochondrial outer import machinery (MIM) complex that mediates transport of proteins into mitochondrial compartments. Promotes the insertion of tom70 into the outer mitochondrial membrane. Promotes the insertion of atg43 into the outer mitochondrial membrane. Involved in import of the subset of proteins with multiple alpha-helical transmembrane segments. The protein is Mitochondrial import protein 2 of Schizosaccharomyces pombe (strain 972 / ATCC 24843) (Fission yeast).